The following is a 254-amino-acid chain: 3-deoxy-manno-octulosonate cytidylyltransferase (254 aa).

This sequence belongs to the KdsB family.

It is found in the cytoplasm. The catalysed reaction is 3-deoxy-alpha-D-manno-oct-2-ulosonate + CTP = CMP-3-deoxy-beta-D-manno-octulosonate + diphosphate. It functions in the pathway nucleotide-sugar biosynthesis; CMP-3-deoxy-D-manno-octulosonate biosynthesis; CMP-3-deoxy-D-manno-octulosonate from 3-deoxy-D-manno-octulosonate and CTP: step 1/1. It participates in bacterial outer membrane biogenesis; lipopolysaccharide biosynthesis. Functionally, activates KDO (a required 8-carbon sugar) for incorporation into bacterial lipopolysaccharide in Gram-negative bacteria. The protein is 3-deoxy-manno-octulosonate cytidylyltransferase of Tolumonas auensis (strain DSM 9187 / NBRC 110442 / TA 4).